The following is a 271-amino-acid chain: p-hydroxybenzoate hydroxylase transcriptional activator (271 aa).

One can recognise an HTH iclR-type domain in the interval Ile23–His83. Residues Val45–Lys64 constitute a DNA-binding region (H-T-H motif). Residues Leu98–Val271 form the IclR-ED domain.

Positive regulator of the pobA gene for p-hydroxybenzoate hydroxylase. The chain is p-hydroxybenzoate hydroxylase transcriptional activator (pobR) from Acinetobacter baylyi (strain ATCC 33305 / BD413 / ADP1).